The primary structure comprises 705 residues: Polyribonucleotide nucleotidyltransferase (705 aa).

Mg(2+)-binding residues include D486 and D492. The KH domain maps to 553–612 (PRIIKFKINPEKIRDVIGKGGAVIRALTEETGTTIDISDDGSVTIASISNEGGEQAKRRI). In terms of domain architecture, S1 motif spans 622–690 (GKIYEGTVLK…DKGRLRLSMK (69 aa)).

This sequence belongs to the polyribonucleotide nucleotidyltransferase family. It depends on Mg(2+) as a cofactor.

It localises to the cytoplasm. It carries out the reaction RNA(n+1) + phosphate = RNA(n) + a ribonucleoside 5'-diphosphate. In terms of biological role, involved in mRNA degradation. Catalyzes the phosphorolysis of single-stranded polyribonucleotides processively in the 3'- to 5'-direction. This chain is Polyribonucleotide nucleotidyltransferase, found in Nitrosomonas eutropha (strain DSM 101675 / C91 / Nm57).